Consider the following 239-residue polypeptide: Phosphoribosylaminoimidazole-succinocarboxamide synthase (239 aa).

It belongs to the SAICAR synthetase family.

The enzyme catalyses 5-amino-1-(5-phospho-D-ribosyl)imidazole-4-carboxylate + L-aspartate + ATP = (2S)-2-[5-amino-1-(5-phospho-beta-D-ribosyl)imidazole-4-carboxamido]succinate + ADP + phosphate + 2 H(+). Its pathway is purine metabolism; IMP biosynthesis via de novo pathway; 5-amino-1-(5-phospho-D-ribosyl)imidazole-4-carboxamide from 5-amino-1-(5-phospho-D-ribosyl)imidazole-4-carboxylate: step 1/2. In Bacillus cereus (strain G9842), this protein is Phosphoribosylaminoimidazole-succinocarboxamide synthase.